A 408-amino-acid polypeptide reads, in one-letter code: Succinylornithine transaminase (408 aa).

Position 252 is an N6-(pyridoxal phosphate)lysine (Lys-252).

Belongs to the class-III pyridoxal-phosphate-dependent aminotransferase family. AstC subfamily. Pyridoxal 5'-phosphate is required as a cofactor.

It catalyses the reaction N(2)-succinyl-L-ornithine + 2-oxoglutarate = N-succinyl-L-glutamate 5-semialdehyde + L-glutamate. The protein operates within amino-acid degradation; L-arginine degradation via AST pathway; L-glutamate and succinate from L-arginine: step 3/5. Functionally, catalyzes the transamination of N(2)-succinylornithine and alpha-ketoglutarate into N(2)-succinylglutamate semialdehyde and glutamate. Can also act as an acetylornithine aminotransferase. The protein is Succinylornithine transaminase of Salmonella enteritidis PT4 (strain P125109).